Consider the following 828-residue polypeptide: Periplasmic nitrate reductase (828 aa).

Positions 1–32 (MNLSRRDFMKTNAAVAAAAVAGLAIPVKNVEA) form a signal peptide, tat-type signal. In terms of domain architecture, 4Fe-4S Mo/W bis-MGD-type spans 38 to 94 (IKWDKAPCRFCGTGCSVLVGTQNGRVVASQGDPDADVNRGLNCIKGYFLPKIMYGKD). 4 residues coordinate [4Fe-4S] cluster: Cys45, Cys48, Cys52, and Cys80. Mo-bis(molybdopterin guanine dinucleotide) is bound by residues Lys82, Gln149, Asn174, Cys178, 211–218 (WGSNMAEM), 242–246 (STFEH), 261–263 (QSD), Met372, Gln376, Asn482, 508–509 (SD), Lys531, Asp558, and 718–727 (TGRVLEHWHT). Phe794 serves as a coordination point for substrate. Positions 802 and 819 each coordinate Mo-bis(molybdopterin guanine dinucleotide).

It belongs to the prokaryotic molybdopterin-containing oxidoreductase family. NasA/NapA/NarB subfamily. In terms of assembly, component of the periplasmic nitrate reductase NapAB complex composed of NapA and NapB. It depends on [4Fe-4S] cluster as a cofactor. Requires Mo-bis(molybdopterin guanine dinucleotide) as cofactor. In terms of processing, predicted to be exported by the Tat system. The position of the signal peptide cleavage has not been experimentally proven.

The protein localises to the periplasm. It carries out the reaction 2 Fe(II)-[cytochrome] + nitrate + 2 H(+) = 2 Fe(III)-[cytochrome] + nitrite + H2O. Catalytic subunit of the periplasmic nitrate reductase complex NapAB. Receives electrons from NapB and catalyzes the reduction of nitrate to nitrite. This chain is Periplasmic nitrate reductase, found in Pasteurella multocida (strain Pm70).